A 372-amino-acid polypeptide reads, in one-letter code: tRNA-specific 2-thiouridylase MnmA (372 aa).

Residues 7–14 (GLSGGVDS) and Met33 each bind ATP. Positions 104–106 (NPD) are interaction with target base in tRNA. Cys109 acts as the Nucleophile in catalysis. A disulfide bridge connects residues Cys109 and Cys202. Gly134 serves as a coordination point for ATP. Residues 152–154 (KDQ) form an interaction with tRNA region. Cys202 (cysteine persulfide intermediate) is an active-site residue. Positions 310-311 (RY) are interaction with tRNA.

This sequence belongs to the MnmA/TRMU family.

Its subcellular location is the cytoplasm. It carries out the reaction S-sulfanyl-L-cysteinyl-[protein] + uridine(34) in tRNA + AH2 + ATP = 2-thiouridine(34) in tRNA + L-cysteinyl-[protein] + A + AMP + diphosphate + H(+). Catalyzes the 2-thiolation of uridine at the wobble position (U34) of tRNA, leading to the formation of s(2)U34. The chain is tRNA-specific 2-thiouridylase MnmA from Mesomycoplasma hyopneumoniae (strain 232) (Mycoplasma hyopneumoniae).